Consider the following 288-residue polypeptide: Fe-S cluster assembly protein dre2 (288 aa).

Residues 1-127 (MSSSVLVLTS…LSRPNQVEAV (127 aa)) form an N-terminal SAM-like domain region. Residues 128-177 (PIKLSNKNGQSASKNKILDFLKSDKENLISGDDDQELIDEDELLDESAHD) are linker. Residues Cys-185, Cys-196, Cys-199, and Cys-201 each coordinate [2Fe-2S] cluster. The segment at 185-201 (CKPEPGKKKRACKNCTC) is fe-S binding site A. [4Fe-4S] cluster is bound by residues Cys-244, Cys-247, Cys-255, and Cys-258. 2 short sequence motifs (cx2C motif) span residues 244 to 247 (CGNC) and 255 to 258 (CSGC). A fe-S binding site B region spans residues 244-258 (CGNCYLGDAFRCSGC).

The protein belongs to the anamorsin family. As to quaternary structure, monomer. Interacts with tah18. Interacts with tim40. Requires [2Fe-2S] cluster as cofactor. It depends on [4Fe-4S] cluster as a cofactor.

It is found in the cytoplasm. Its subcellular location is the mitochondrion intermembrane space. In terms of biological role, component of the cytosolic iron-sulfur (Fe-S) protein assembly (CIA) machinery required for the maturation of extramitochondrial Fe-S proteins. Part of an electron transfer chain functioning in an early step of cytosolic Fe-S biogenesis, facilitating the de novo assembly of a [4Fe-4S] cluster on the scaffold complex cfd1-nbp35. Electrons are transferred to dre2 from NADPH via the FAD- and FMN-containing protein tah18. Tah18-dre2 are also required for the assembly of the diferric tyrosyl radical cofactor of ribonucleotide reductase (RNR), probably by providing electrons for reduction during radical cofactor maturation in the catalytic small subunit suc22. The protein is Fe-S cluster assembly protein dre2 of Schizosaccharomyces pombe (strain 972 / ATCC 24843) (Fission yeast).